Reading from the N-terminus, the 112-residue chain is Large ribosomal subunit protein bL17 (112 aa).

This sequence belongs to the bacterial ribosomal protein bL17 family. As to quaternary structure, part of the 50S ribosomal subunit. Contacts protein L32.

The polypeptide is Large ribosomal subunit protein bL17 (Caldanaerobacter subterraneus subsp. tengcongensis (strain DSM 15242 / JCM 11007 / NBRC 100824 / MB4) (Thermoanaerobacter tengcongensis)).